Consider the following 807-residue polypeptide: Ribosome biogenesis protein ERB1 (807 aa).

Positions Met-1–Ser-112 are disordered. 2 stretches are compositionally biased toward acidic residues: residues Glu-21–Asp-30 and Glu-42–Ala-56. The residue at position 23 (Ser-23) is a Phosphoserine. Residues Val-57–Gln-69 show a composition bias toward basic and acidic residues. Ser-72 and Ser-76 each carry phosphoserine. Residues Glu-86–Asp-102 show a composition bias toward acidic residues. Residue Lys-127 forms a Glycyl lysine isopeptide (Lys-Gly) (interchain with G-Cter in ubiquitin) linkage. Ser-146 and Ser-149 each carry phosphoserine. Residues Arg-265–Ser-383 are required for interaction with NOP7. The interval Ser-383 to Pro-419 is required for interaction with YTM1. Ser-418 is modified (phosphoserine). WD repeat units follow at residues Gly-435–Arg-474, Asn-483–Glu-523, Ser-592–Pro-634, Lys-637–Lys-675, Pro-678–Lys-717, Tyr-721–Lys-760, and Ile-776–Thr-807.

It belongs to the WD repeat BOP1/ERB1 family. As to quaternary structure, component of the NOP7 complex, composed of ERB1, NOP7 and YTM1. The complex is held together by ERB1, which interacts with NOP7 via its N-terminal domain and with YTM1 via a high-affinity interaction between the seven-bladed beta-propeller domains of the 2 proteins. The NOP7 complex associates with the 66S pre-ribosome.

It is found in the nucleus. The protein resides in the nucleolus. Its subcellular location is the nucleoplasm. In terms of biological role, component of the NOP7 complex, which is required for maturation of the 25S and 5.8S ribosomal RNAs and formation of the 60S ribosome. The protein is Ribosome biogenesis protein ERB1 of Saccharomyces cerevisiae (strain YJM789) (Baker's yeast).